Here is a 106-residue protein sequence, read N- to C-terminus: MADFLGMMKQAAQLQSKMKAMQDELDHVEVEGASGGGLVSVRMTAKMEVKAISIDPSLMKPDEREILEDLVVSALGDARRKAEVAMQEKMQALTGGLGLPPGLGLG.

Belongs to the YbaB/EbfC family. Homodimer.

Its subcellular location is the cytoplasm. It localises to the nucleoid. In terms of biological role, binds to DNA and alters its conformation. May be involved in regulation of gene expression, nucleoid organization and DNA protection. The polypeptide is Nucleoid-associated protein Nham_0463 (Nitrobacter hamburgensis (strain DSM 10229 / NCIMB 13809 / X14)).